The sequence spans 711 residues: MSEDAIGQQVPAAQEAAAGAEPNSAARERHATLSRELTEHQYRYYVLDAPTISDAAFDEQLRELAALEAEFPALRTPDSPTQRVGGAFSTDFTPVAHAERMMSLDNAFSDEELAAWAERVERDAGGPVPYLCELKVDGLAINLTYERGRLVRAATRGDGRTGEDVTANVRSIQDVPGELTPSAEFPEIPDLLEVRGEIYFPVAGFADLNAGLVEQGRAPFANPRNAAAGSLRQKDPRITASRPLRLVVHGFGARRGWAPSTQSESYAALRTWGLPTSDRWRVVPGLAGVAEYVAHYAAHRHDVEHEIDGVVVKVDPVAIQGRLGSTSRAPRWAIAFKYPPEEVNTRLLDIDVNVGRTGRVTPFAVLEPVRVAGSTVALATLHNAREVERKGVLIGDTVVIRKAGDVIPEVLGPVVELRPPEARSFVMPSRCPCCGTPLAPAKEGDIDIRCPNTRSCPAQLRERVFHLAGRGAFDIEVLGYKGAAALLDAEIITDEGDLFTLDTAQLARSPFFVNKDGSLGSNAVKLLENLTVAKERELWRVLVALSIRHVGPTAAQALARHFRSVEAIDQAGEEELSAVDGVGPTIAASVREWFAVAWHREVVRKWAEAGVRMAEEAVAQGPRPLEGVTVVVTGTLAGYSRDQAAEAIQSRGGKVTGSVSKKTAFVVVGDNPGTKAEKAAGLKVPVLDEEGFQVLLDAGPEAARAVARVEG.

The interval 1–29 is disordered; that stretch reads MSEDAIGQQVPAAQEAAAGAEPNSAARER. The span at 12–25 shows a compositional bias: low complexity; it reads AAQEAAAGAEPNSA. Residues 54–58, 103–104, and E133 contribute to the NAD(+) site; these read DAAFD and SL. K135 serves as the catalytic N6-AMP-lysine intermediate. R156, E197, K313, and K337 together coordinate NAD(+). Positions 431, 434, 450, and 456 each coordinate Zn(2+). One can recognise a BRCT domain in the interval 620-709; the sequence is QGPRPLEGVT…PEAARAVARV (90 aa).

It belongs to the NAD-dependent DNA ligase family. LigA subfamily. Requires Mg(2+) as cofactor. Mn(2+) is required as a cofactor.

The enzyme catalyses NAD(+) + (deoxyribonucleotide)n-3'-hydroxyl + 5'-phospho-(deoxyribonucleotide)m = (deoxyribonucleotide)n+m + AMP + beta-nicotinamide D-nucleotide.. In terms of biological role, DNA ligase that catalyzes the formation of phosphodiester linkages between 5'-phosphoryl and 3'-hydroxyl groups in double-stranded DNA using NAD as a coenzyme and as the energy source for the reaction. It is essential for DNA replication and repair of damaged DNA. This Salinispora tropica (strain ATCC BAA-916 / DSM 44818 / JCM 13857 / NBRC 105044 / CNB-440) protein is DNA ligase.